Consider the following 411-residue polypeptide: MRIAMHLPLLLLYIFLLPLSGANNTDAAHEVIATNTNNWAVLVSTSRFWFNYRHMANVLSMYRTVKRLGIPDSQIILMLSDDVACNSRNLFPGSVFNNKDHAIDLYGDSVEVDYRGYEVTVENFIRLLTDRWTEDHPKSKRLLTDENSNIFIYMTGHGGDDFLKFQDAEEIASEDIADAFQQMYEKKRYNEIFFMIDTCQANTMYSKFYSPNILAVGSSEMDESSYSHHSDVEIGVAVIDRFTYYCLDFLEQIDKNSTLTLQDLFDSFTFEKIHSHVGVRTDLFDRNPSEVLITDFFANVQNVIPDDSKPLSVSHYHHYKDHIDTAQYELNNNVLDLALETYRKNNQSSKIEKKIKDIKSTSVLDVDIDSNECFFTSFKQSATIILALIVTILWFMLRGNTAKATYDLYTN.

Residues 1–22 form the signal peptide; sequence MRIAMHLPLLLLYIFLLPLSGA. The Lumenal segment spans residues 23–376; that stretch reads NNTDAAHEVI…DIDSNECFFT (354 aa). Residues His157 and Cys199 contribute to the active site. 2 N-linked (GlcNAc...) asparagine glycosylation sites follow: Asn256 and Asn346. The helical transmembrane segment at 377–397 threads the bilayer; sequence SFKQSATIILALIVTILWFML. Residues 398–411 are Cytoplasmic-facing; sequence RGNTAKATYDLYTN.

This sequence belongs to the peptidase C13 family. In terms of assembly, forms a complex with CDC91, GPI16, GPI17 and GAA1. In terms of processing, the disulfide bond between GPI8 and GPI16 is important for normal enzyme activity.

Its subcellular location is the endoplasmic reticulum membrane. Its pathway is glycolipid biosynthesis; glycosylphosphatidylinositol-anchor biosynthesis. Its function is as follows. Mediates GPI anchoring in the endoplasmic reticulum, by replacing a protein's C-terminal GPI attachment signal peptide with a pre-assembled GPI. During this transamidation reaction, the GPI transamidase forms a carbonyl intermediate with the substrate protein. This chain is GPI-anchor transamidase (GPI8), found in Saccharomyces cerevisiae (strain ATCC 204508 / S288c) (Baker's yeast).